A 180-amino-acid chain; its full sequence is Minor allergen Can f 2 (180 aa).

The signal sequence occupies residues 1-18; that stretch reads MQLLLLTVGLALICGLQA. Asn-45 carries an N-linked (GlcNAc...) asparagine glycan. Cys-82 and Cys-175 are oxidised to a cystine.

Belongs to the calycin superfamily. Lipocalin family. In terms of tissue distribution, tongue epithelial tissue and parotid gland.

It localises to the secreted. The protein is Minor allergen Can f 2 of Canis lupus familiaris (Dog).